Reading from the N-terminus, the 251-residue chain is Imidazole glycerol phosphate synthase subunit HisF (251 aa).

Residues D11 and D130 contribute to the active site.

The protein belongs to the HisA/HisF family. In terms of assembly, heterodimer of HisH and HisF.

The protein resides in the cytoplasm. It catalyses the reaction 5-[(5-phospho-1-deoxy-D-ribulos-1-ylimino)methylamino]-1-(5-phospho-beta-D-ribosyl)imidazole-4-carboxamide + L-glutamine = D-erythro-1-(imidazol-4-yl)glycerol 3-phosphate + 5-amino-1-(5-phospho-beta-D-ribosyl)imidazole-4-carboxamide + L-glutamate + H(+). Its pathway is amino-acid biosynthesis; L-histidine biosynthesis; L-histidine from 5-phospho-alpha-D-ribose 1-diphosphate: step 5/9. Functionally, IGPS catalyzes the conversion of PRFAR and glutamine to IGP, AICAR and glutamate. The HisF subunit catalyzes the cyclization activity that produces IGP and AICAR from PRFAR using the ammonia provided by the HisH subunit. The chain is Imidazole glycerol phosphate synthase subunit HisF from Cytophaga hutchinsonii (strain ATCC 33406 / DSM 1761 / CIP 103989 / NBRC 15051 / NCIMB 9469 / D465).